A 317-amino-acid chain; its full sequence is MGLTIGVDIGGTKIAAGVVDEEGNILSTHKVPTPTTPEAIVDAIASAVEGARVGHEIVAVGIGAAGYVNRQRSTVYFAPNIDWRQEPLKEKVEARVGLPVVVENDANAAAWGEYKFGGGKGHRNVICITLGTGLGGGIIIGNKLRRGHFGVAAEFGHIRMVPDGLLCGCGSQGCWEQYASGRALVRYAKQRANATPERAEVLLALGDGTPDGIEGKHISVAARQGCPVAVDSYRELARWAGAGLADLASLFDPSAFIVGGGLSDEGDLVLDPIRKSYKRWLVGGNWRPVADVIAAQLGNKAGLVGAADLAREPDPIM.

6 to 12 is a binding site for ATP; that stretch reads GVDIGGT.

The protein belongs to the ROK (NagC/XylR) family. As to quaternary structure, homooligomer (possibly a homotetramer). Alternatively, it may form a heterotetramer of two glucokinase subunits with two ORF2 (AC P40182) proteins.

The protein resides in the cytoplasm. The enzyme catalyses D-glucose + ATP = D-glucose 6-phosphate + ADP + H(+). Functionally, a probable glucose kinase. Required for glucose repression of many different genes, restores glucose kinase activity in E.coli glk mutants. The chain is Glucokinase (glkA) from Streptomyces coelicolor (strain ATCC BAA-471 / A3(2) / M145).